Reading from the N-terminus, the 183-residue chain is Microfibrillar-associated protein 2 (183 aa).

A signal peptide (or 18) is located at residues 1–16 (MRAACLFLLFMPGLLA). Position 17 is a pyrrolidone carboxylic acid (Gln17). Residues Tyr46, Tyr47, and Tyr49 each carry the sulfotyrosine modification. The segment at 52 to 92 (VSPRTPEEQFQSQQQVQQEVIPAPTPEPAAAGDLETEPTEP) is disordered. Low complexity predominate over residues 59-70 (EQFQSQQQVQQE). Residues 153–183 (CRDKFSKCGVMAVSGLCQSVAASCARSCGGC) form the ShKT domain. Cystine bridges form between Cys153-Cys183, Cys160-Cys176, and Cys169-Cys180.

It belongs to the MFAP family. As to quaternary structure, forms a ternary complex with BGN and ELN. Interacts with FBN1 (via N-terminal domain) and FBN2. Post-translationally, forms intermolecular disulfide bonds either with other MAGP-1 molecules or with other components of the microfibrils. May form transglutaminase cross-links. In terms of processing, O-glycosylated.

Its subcellular location is the secreted. The protein resides in the extracellular space. It localises to the extracellular matrix. In terms of biological role, component of the elastin-associated microfibrils. This Mus musculus (Mouse) protein is Microfibrillar-associated protein 2 (Mfap2).